The primary structure comprises 527 residues: Beta-glucosidase 19 (527 aa).

The N-terminal stretch at 1–21 is a signal peptide; sequence MKIPLLGLLLLISLVGSPTRA. Residues Q52 and H155 each coordinate a beta-D-glucoside. Residue N183 is glycosylated (N-linked (GlcNAc...) asparagine). A beta-D-glucoside is bound at residue 200–201; sequence NE. The Proton donor role is filled by E201. A disulfide bond links C220 and C231. A beta-D-glucoside contacts are provided by Y345 and E418. The active-site Nucleophile is the E418. N462 carries an N-linked (GlcNAc...) asparagine glycan. A beta-D-glucoside-binding positions include W469, 476–477, and F485; that span reads EW. N495 carries an N-linked (GlcNAc...) asparagine glycan. The Prevents secretion from ER signature appears at 524-527; the sequence is HEEL.

The protein belongs to the glycosyl hydrolase 1 family.

The protein localises to the endoplasmic reticulum lumen. The catalysed reaction is Hydrolysis of terminal, non-reducing beta-D-glucosyl residues with release of beta-D-glucose.. The sequence is that of Beta-glucosidase 19 from Arabidopsis thaliana (Mouse-ear cress).